We begin with the raw amino-acid sequence, 482 residues long: tRNA sulfurtransferase (482 aa).

In terms of domain architecture, THUMP spans 61-165 (LAIRDALTRI…DDRLLLIKGR (105 aa)). ATP contacts are provided by residues 183–184 (LI), Lys265, Gly287, and Gln296. The cysteines at positions 344 and 456 are disulfide-linked. A Rhodanese domain is found at 404–482 (FGPNDVILDI…GFENVKAYRP (79 aa)). Cys456 functions as the Cysteine persulfide intermediate in the catalytic mechanism.

Belongs to the ThiI family.

Its subcellular location is the cytoplasm. The catalysed reaction is [ThiI sulfur-carrier protein]-S-sulfanyl-L-cysteine + a uridine in tRNA + 2 reduced [2Fe-2S]-[ferredoxin] + ATP + H(+) = [ThiI sulfur-carrier protein]-L-cysteine + a 4-thiouridine in tRNA + 2 oxidized [2Fe-2S]-[ferredoxin] + AMP + diphosphate. The enzyme catalyses [ThiS sulfur-carrier protein]-C-terminal Gly-Gly-AMP + S-sulfanyl-L-cysteinyl-[cysteine desulfurase] + AH2 = [ThiS sulfur-carrier protein]-C-terminal-Gly-aminoethanethioate + L-cysteinyl-[cysteine desulfurase] + A + AMP + 2 H(+). It participates in cofactor biosynthesis; thiamine diphosphate biosynthesis. Catalyzes the ATP-dependent transfer of a sulfur to tRNA to produce 4-thiouridine in position 8 of tRNAs, which functions as a near-UV photosensor. Also catalyzes the transfer of sulfur to the sulfur carrier protein ThiS, forming ThiS-thiocarboxylate. This is a step in the synthesis of thiazole, in the thiamine biosynthesis pathway. The sulfur is donated as persulfide by IscS. This Salmonella gallinarum (strain 287/91 / NCTC 13346) protein is tRNA sulfurtransferase.